The chain runs to 1858 residues: Protein ROS1C (1858 aa).

A compositionally biased stretch (basic and acidic residues) spans 347–356 (TEALKGEDAP). Disordered stretches follow at residues 347 to 416 (TEAL…AEPF) and 1288 to 1309 (PDTAAQASKPKKSRTTSKKNSE). Basic residues-rich tracts occupy residues 360–370 (LKTRRRKHRPK) and 394–404 (KPKRKYVRKNR). 4 residues coordinate [4Fe-4S] cluster: Cys-1492, Cys-1499, Cys-1502, and Cys-1508.

The protein belongs to the DNA glycosylase family. DEMETER subfamily. [4Fe-4S] cluster serves as cofactor. As to expression, expressed in pistils and immature seeds. Expressed a low levels in roots, leaves and anthers.

The protein resides in the nucleus. In terms of biological role, bifunctional DNA glycosylase/lyase, which excises 5-methylcytosine (5-meC) and 5-hydroxymethylcytosine (5-hmeC), leaving an apyrimidinic (AP) site that is subsequently incised by the lyase activity. Is responsible for the demethylation of methylated cytosine residues of Tos17 retrotransposon DNA. Demethylation of Tos17 cytosine residues promotes its transposition. May be involved in seed development. This chain is Protein ROS1C, found in Oryza sativa subsp. japonica (Rice).